The sequence spans 81 residues: Beta-defensin 34 (81 aa).

The first 20 residues, 1–20 (MKTFLFLFAVLFFWSQPRMH), serve as a signal peptide directing secretion. 3 disulfides stabilise this stretch: Cys-28–Cys-55, Cys-35–Cys-49, and Cys-39–Cys-56. A compositionally biased stretch (polar residues) spans 62–72 (CGRSKGNQSDE). The segment at 62 to 81 (CGRSKGNQSDEGSGHMGTRG) is disordered.

It belongs to the beta-defensin family. As to expression, only expressed in epididymis (caput, corpus and cauda).

It is found in the secreted. Its function is as follows. Has antibacterial activity. This chain is Beta-defensin 34 (Defb34), found in Mus musculus (Mouse).